A 194-amino-acid chain; its full sequence is Probable GTP-binding protein EngB (194 aa).

One can recognise an EngB-type G domain in the interval 22-194 (PLPEVALAGR…AWKAILHAIS (173 aa)). GTP contacts are provided by residues 30–37 (GRSNVGKS), 57–61 (GKTQT), 75–78 (DVPG), 142–145 (TKCD), and 174–176 (FSS). Residues Ser37 and Thr59 each contribute to the Mg(2+) site.

This sequence belongs to the TRAFAC class TrmE-Era-EngA-EngB-Septin-like GTPase superfamily. EngB GTPase family. It depends on Mg(2+) as a cofactor.

In terms of biological role, necessary for normal cell division and for the maintenance of normal septation. The sequence is that of Probable GTP-binding protein EngB from Halalkalibacterium halodurans (strain ATCC BAA-125 / DSM 18197 / FERM 7344 / JCM 9153 / C-125) (Bacillus halodurans).